A 174-amino-acid polypeptide reads, in one-letter code: NADH-quinone oxidoreductase subunit B 2 (174 aa).

[4Fe-4S] cluster is bound by residues cysteine 53, cysteine 54, cysteine 118, and cysteine 148.

Belongs to the complex I 20 kDa subunit family. In terms of assembly, NDH-1 is composed of 14 different subunits. Subunits NuoB, C, D, E, F, and G constitute the peripheral sector of the complex. [4Fe-4S] cluster serves as cofactor.

It localises to the cell inner membrane. The enzyme catalyses a quinone + NADH + 5 H(+)(in) = a quinol + NAD(+) + 4 H(+)(out). Functionally, NDH-1 shuttles electrons from NADH, via FMN and iron-sulfur (Fe-S) centers, to quinones in the respiratory chain. Couples the redox reaction to proton translocation (for every two electrons transferred, four hydrogen ions are translocated across the cytoplasmic membrane), and thus conserves the redox energy in a proton gradient. In Cereibacter sphaeroides (strain ATCC 17025 / ATH 2.4.3) (Rhodobacter sphaeroides), this protein is NADH-quinone oxidoreductase subunit B 2.